A 469-amino-acid polypeptide reads, in one-letter code: ATP synthase subunit beta (469 aa).

Residue 156-163 (GGAGVGKT) coordinates ATP.

The protein belongs to the ATPase alpha/beta chains family. F-type ATPases have 2 components, CF(1) - the catalytic core - and CF(0) - the membrane proton channel. CF(1) has five subunits: alpha(3), beta(3), gamma(1), delta(1), epsilon(1). CF(0) has three main subunits: a(1), b(2) and c(9-12). The alpha and beta chains form an alternating ring which encloses part of the gamma chain. CF(1) is attached to CF(0) by a central stalk formed by the gamma and epsilon chains, while a peripheral stalk is formed by the delta and b chains.

It is found in the cell membrane. It catalyses the reaction ATP + H2O + 4 H(+)(in) = ADP + phosphate + 5 H(+)(out). Functionally, produces ATP from ADP in the presence of a proton gradient across the membrane. The catalytic sites are hosted primarily by the beta subunits. The sequence is that of ATP synthase subunit beta from Bacillus anthracis (strain CDC 684 / NRRL 3495).